The chain runs to 97 residues: Protein SENESCENCE-ASSOCIATED GENE 21, mitochondrial (97 aa).

A mitochondrion-targeting transit peptide spans 1 to 46; the sequence is MARSISNVKIVSAFVSRELSNAIFRRGYAATAAQGSVSSGGRSGAV.

This sequence belongs to the LEA type 3 family. Expressed in roots, stems leaves and flowers, but not in seeds. In short days, observed in cotyledons and roots but absent from rosette leaves.

It localises to the mitochondrion. Its function is as follows. Mediates tolerance to oxidative stresses (e.g. hydrogen peroxide H(2)O(2), diamide, menadione and tert-butyl hydroperoxide) by minimizing the negative effects of oxidation and monitoring photosynthesis during stress. Promotes root development. Prevents premature aging (e.g. senescence and flowering). Involved in resistance against compatible pathogens such as Botrytis cinerea and Pseudomonas syringae pv. tomato. The polypeptide is Protein SENESCENCE-ASSOCIATED GENE 21, mitochondrial (Arabidopsis thaliana (Mouse-ear cress)).